The following is a 348-amino-acid chain: Succinylglutamate desuccinylase (348 aa).

Zn(2+) is bound by residues His64, Glu67, and His164. Residue Glu228 is part of the active site.

This sequence belongs to the AspA/AstE family. Succinylglutamate desuccinylase subfamily. It depends on Zn(2+) as a cofactor.

The enzyme catalyses N-succinyl-L-glutamate + H2O = L-glutamate + succinate. Its pathway is amino-acid degradation; L-arginine degradation via AST pathway; L-glutamate and succinate from L-arginine: step 5/5. Its function is as follows. Transforms N(2)-succinylglutamate into succinate and glutamate. The protein is Succinylglutamate desuccinylase of Shewanella amazonensis (strain ATCC BAA-1098 / SB2B).